Here is a 522-residue protein sequence, read N- to C-terminus: Peptide chain release factor 3 (522 aa).

Residues 10 to 277 (ASRKTFAIIS…TFVDFAPAPS (268 aa)) enclose the tr-type G domain. GTP contacts are provided by residues 19 to 26 (SHPDAGKT), 87 to 91 (DTPGH), and 141 to 144 (NKMD).

This sequence belongs to the TRAFAC class translation factor GTPase superfamily. Classic translation factor GTPase family. PrfC subfamily.

It localises to the cytoplasm. Its function is as follows. Increases the formation of ribosomal termination complexes and stimulates activities of RF-1 and RF-2. It binds guanine nucleotides and has strong preference for UGA stop codons. It may interact directly with the ribosome. The stimulation of RF-1 and RF-2 is significantly reduced by GTP and GDP, but not by GMP. The sequence is that of Peptide chain release factor 3 from Listeria welshimeri serovar 6b (strain ATCC 35897 / DSM 20650 / CCUG 15529 / CIP 8149 / NCTC 11857 / SLCC 5334 / V8).